We begin with the raw amino-acid sequence, 341 residues long: Phosphoribosylaminoimidazole-succinocarboxamide synthase, chloroplastic (341 aa).

The protein belongs to the SAICAR synthetase family.

It is found in the plastid. It localises to the chloroplast. The enzyme catalyses 5-amino-1-(5-phospho-D-ribosyl)imidazole-4-carboxylate + L-aspartate + ATP = (2S)-2-[5-amino-1-(5-phospho-beta-D-ribosyl)imidazole-4-carboxamido]succinate + ADP + phosphate + 2 H(+). Its pathway is purine metabolism; IMP biosynthesis via de novo pathway; 5-amino-1-(5-phospho-D-ribosyl)imidazole-4-carboxamide from 5-amino-1-(5-phospho-D-ribosyl)imidazole-4-carboxylate: step 1/2. The polypeptide is Phosphoribosylaminoimidazole-succinocarboxamide synthase, chloroplastic (PUR7) (Vigna aconitifolia (Moth bean)).